We begin with the raw amino-acid sequence, 792 residues long: MASELLRLLEFDKIRELLAARCQYSVASERAREIAPTADRDQVAYLLRVTREAARLLNERPSFTIGGFRDIRSVVQAAQRGNILAPADVRTVLDTLEAAASLRRQFMADERWSERYPALAEFVLAMVDLPGLRADLARSIGPRGEVLDTASPELAAIRRSLKEAHERLLERLRRLLAERQEAIQDAYVTIRDGRYVIPVRADRRQAVPGITHDVSGSGQTLFVEPFEVLELNNRWRELQAAETREIERILRVLTQRIADAADELLQIVEAGAALDLALAKARLAYDLDAVEPELLEPSGPTVPEGHPFLRVRLRAARHPLLDRRTAVPIDVELGERFRILVITGPNTGGKTVALKTVGLLALMAQAGLFIPAAPGSGLSVFPAIFVDIGDEQSIEQNLSTFSSHMRRIVATLQQADASSLVLLDEIAAGTDPQEGAALARAILERLLEIGALGIVTTHYPELKVFATGTPGLENASVEFDPVTLSPTYRLLVGLPGRSHALEVARRLGLPEDVIARARELLGSGAPQLDRLIAEMQRRLEEAESLAAAAERSRREAEQLRAAAERLLAEAERERREARQEVLRELEAELARARELARKIERAARSPAYPPIEVTQDSLRALEEVKRRVQSSGRQSRQERVPEIAVGDRVELTALGLEGDVVAIHPESEEVEVRIGQFRVRQPQASVRRIWPRREEVSQTFAPPVSVTTIPRVEPEIHLRGLHVEEALDRLDRYLDRAVRAGLPWVRVVHGKGTGTLRQAIHAFLRDHPLVKSWELAGPHEGGLGVTVVYLEV.

344–351 (GPNTGGKT) contributes to the ATP binding site. Residues 716 to 791 (IHLRGLHVEE…GLGVTVVYLE (76 aa)) enclose the Smr domain.

Belongs to the DNA mismatch repair MutS family. MutS2 subfamily. In terms of assembly, homodimer. Binds to stalled ribosomes, contacting rRNA.

Its function is as follows. Endonuclease that is involved in the suppression of homologous recombination and thus may have a key role in the control of bacterial genetic diversity. In terms of biological role, acts as a ribosome collision sensor, splitting the ribosome into its 2 subunits. Detects stalled/collided 70S ribosomes which it binds and splits by an ATP-hydrolysis driven conformational change. Acts upstream of the ribosome quality control system (RQC), a ribosome-associated complex that mediates the extraction of incompletely synthesized nascent chains from stalled ribosomes and their subsequent degradation. Probably generates substrates for RQC. The sequence is that of Endonuclease MutS2 from Thermomicrobium roseum (strain ATCC 27502 / DSM 5159 / P-2).